Here is a 771-residue protein sequence, read N- to C-terminus: DNA helicase/primase complex-associated protein (771 aa).

Belongs to the herpesviridae HEPA family. Associates with the primase and the helicase to form the helicase-primase complex. Interacts with the origin-binding protein. Interacts with the polymerase catalytic subunit.

Its subcellular location is the host nucleus. Functionally, component of the helicase/primase complex. Unwinds the DNA at the replication forks and generates single-stranded DNA for both leading and lagging strand synthesis. The primase synthesizes short RNA primers on the lagging strand that the polymerase presumably elongates using dNTPs. The primase-associated factor has no known catalytic activity in the complex and may serve to facilitate the formation of the replisome by directly interacting with the origin-binding protein and the polymerase. This Homo sapiens (Human) protein is DNA helicase/primase complex-associated protein.